Consider the following 155-residue polypeptide: S-ribosylhomocysteine lyase (155 aa).

Residues His54, His58, and Cys122 each contribute to the Fe cation site.

It belongs to the LuxS family. Homodimer. Fe cation serves as cofactor.

The catalysed reaction is S-(5-deoxy-D-ribos-5-yl)-L-homocysteine = (S)-4,5-dihydroxypentane-2,3-dione + L-homocysteine. In terms of biological role, involved in the synthesis of autoinducer 2 (AI-2) which is secreted by bacteria and is used to communicate both the cell density and the metabolic potential of the environment. The regulation of gene expression in response to changes in cell density is called quorum sensing. Catalyzes the transformation of S-ribosylhomocysteine (RHC) to homocysteine (HC) and 4,5-dihydroxy-2,3-pentadione (DPD). The sequence is that of S-ribosylhomocysteine lyase from Deinococcus geothermalis (strain DSM 11300 / CIP 105573 / AG-3a).